We begin with the raw amino-acid sequence, 100 residues long: Urease subunit gamma (100 aa).

This sequence belongs to the urease gamma subunit family. As to quaternary structure, heterotrimer of UreA (gamma), UreB (beta) and UreC (alpha) subunits. Three heterotrimers associate to form the active enzyme.

Its subcellular location is the cytoplasm. It carries out the reaction urea + 2 H2O + H(+) = hydrogencarbonate + 2 NH4(+). It functions in the pathway nitrogen metabolism; urea degradation; CO(2) and NH(3) from urea (urease route): step 1/1. This is Urease subunit gamma from Agrobacterium fabrum (strain C58 / ATCC 33970) (Agrobacterium tumefaciens (strain C58)).